We begin with the raw amino-acid sequence, 189 residues long: Protein shisa-like-2A (189 aa).

2 helical membrane-spanning segments follow: residues 48–68 (SFFP…LVGL) and 70–90 (TAAV…YLFI). Positions 98-189 (LDPGLSLQTT…PTPGPHGPVP (92 aa)) are disordered. The segment covering 140–171 (NTHLESNKKQTVSPTCLPQNQFMATVTASNIP) has biased composition (polar residues).

This sequence belongs to the shisa family.

The protein resides in the membrane. In Mus musculus (Mouse), this protein is Protein shisa-like-2A (Shisal2a).